The chain runs to 286 residues: Pantothenate synthetase (286 aa).

30 to 37 (MGNLHAGH) contacts ATP. The Proton donor role is filled by histidine 37. (R)-pantoate is bound at residue glutamine 61. A beta-alanine-binding site is contributed by glutamine 61. 149–152 (GEKD) lines the ATP pocket. Position 155 (glutamine 155) interacts with (R)-pantoate. ATP is bound by residues valine 178 and 186 to 189 (MSSR).

The protein belongs to the pantothenate synthetase family. Homodimer.

The protein localises to the cytoplasm. It carries out the reaction (R)-pantoate + beta-alanine + ATP = (R)-pantothenate + AMP + diphosphate + H(+). Its pathway is cofactor biosynthesis; (R)-pantothenate biosynthesis; (R)-pantothenate from (R)-pantoate and beta-alanine: step 1/1. Its function is as follows. Catalyzes the condensation of pantoate with beta-alanine in an ATP-dependent reaction via a pantoyl-adenylate intermediate. In Thioalkalivibrio sulfidiphilus (strain HL-EbGR7), this protein is Pantothenate synthetase.